A 505-amino-acid polypeptide reads, in one-letter code: Cobyric acid synthase (505 aa).

One can recognise a GATase cobBQ-type domain in the interval 251–444; that stretch reads DIDVAVIKLP…IHGIFDNSEF (194 aa). Cysteine 332 acts as the Nucleophile in catalysis. The active site involves histidine 436.

The protein belongs to the CobB/CobQ family. CobQ subfamily.

The protein operates within cofactor biosynthesis; adenosylcobalamin biosynthesis. In terms of biological role, catalyzes amidations at positions B, D, E, and G on adenosylcobyrinic A,C-diamide. NH(2) groups are provided by glutamine, and one molecule of ATP is hydrogenolyzed for each amidation. This chain is Cobyric acid synthase, found in Clostridium novyi (strain NT).